A 769-amino-acid chain; its full sequence is Probable beta-glucosidase M (769 aa).

The signal sequence occupies residues 1-22 (MHSNVGLAGLAGLLATASVCLS). 3 N-linked (GlcNAc...) asparagine glycosylation sites follow: Asn-28, Asn-75, and Asn-262. Asp-290 is a catalytic residue. Asn-318, Asn-325, Asn-396, Asn-437, Asn-510, Asn-546, and Asn-625 each carry an N-linked (GlcNAc...) asparagine glycan.

Belongs to the glycosyl hydrolase 3 family.

The protein localises to the secreted. The enzyme catalyses Hydrolysis of terminal, non-reducing beta-D-glucosyl residues with release of beta-D-glucose.. Its pathway is glycan metabolism; cellulose degradation. In terms of biological role, beta-glucosidases are one of a number of cellulolytic enzymes involved in the degradation of cellulosic biomass. Catalyzes the last step releasing glucose from the inhibitory cellobiose. This Aspergillus fumigatus (strain CBS 144.89 / FGSC A1163 / CEA10) (Neosartorya fumigata) protein is Probable beta-glucosidase M (bglM).